We begin with the raw amino-acid sequence, 567 residues long: Structural protein ORF567 (567 aa).

Residues 7–393 (INALLGFPEE…MPIEHKPEQQ (387 aa)) form a disordered region. Residues 65-79 (TPTPIRPAPPPPPPI) show a composition bias toward pro residues. Over residues 180 to 200 (PKREPEHHTHGSTNNEHESKR) the composition is skewed to basic and acidic residues. Residues 219-231 (THQTSPSHSSGGT) show a composition bias toward low complexity. Composition is skewed to pro residues over residues 253-278 (MPIP…PTPP) and 285-299 (TPTP…PPPT). The segment covering 300–312 (HGSSSTNSSGSTN) has biased composition (low complexity). Residues 319-335 (PKPIPIPPTPPPPPPHH) are compositionally biased toward pro residues. A compositionally biased stretch (basic and acidic residues) spans 343 to 353 (PKHESEHHDHG). Residues 354–372 (SSSTNSSSSTSNSSSGGTN) are compositionally biased toward low complexity.

The protein resides in the virion. This is Structural protein ORF567 from Acidianus two-tailed virus (ATV).